The sequence spans 323 residues: Peridinin-chlorophyll a-binding protein 3 (323 aa).

2 tandem repeats follow at residues 1–173 and 174–323.

Homotrimer.

The protein localises to the plastid. Its subcellular location is the chloroplast. Water-soluble antenna for capture of solar energy in the blue-green range. Peridinin is an asymmetric carotenoid. The protein is Peridinin-chlorophyll a-binding protein 3 of Amphidinium carterae (Dinoflagellate).